A 228-amino-acid chain; its full sequence is L-ribulose-5-phosphate 4-epimerase UlaF (228 aa).

Residues Gly26 to Asn27, Ser43 to Gly44, and Ser72 to Ser73 contribute to the substrate site. Zn(2+) is bound by residues Asp74, His93, and His95. The Proton donor/acceptor role is filled by Asp118. Residue His167 coordinates Zn(2+). Tyr225 (proton donor/acceptor) is an active-site residue.

This sequence belongs to the aldolase class II family. AraD/FucA subfamily. Zn(2+) serves as cofactor.

It carries out the reaction L-ribulose 5-phosphate = D-xylulose 5-phosphate. It functions in the pathway cofactor degradation; L-ascorbate degradation; D-xylulose 5-phosphate from L-ascorbate: step 4/4. Functionally, catalyzes the isomerization of L-ribulose 5-phosphate to D-xylulose 5-phosphate. Is involved in the anaerobic L-ascorbate utilization. This chain is L-ribulose-5-phosphate 4-epimerase UlaF, found in Escherichia coli (strain ATCC 8739 / DSM 1576 / NBRC 3972 / NCIMB 8545 / WDCM 00012 / Crooks).